The following is a 370-amino-acid chain: Gap junction delta-4 protein (370 aa).

At Met-1–Thr-19 the chain is on the cytoplasmic side. A helical membrane pass occupies residues Met-20–Ala-40. Over Gly-41–Arg-76 the chain is Extracellular. Residues Phe-77 to Leu-97 form a helical membrane-spanning segment. The Cytoplasmic portion of the chain corresponds to His-98–His-146. Residues Leu-147–Phe-167 form a helical membrane-spanning segment. The Extracellular portion of the chain corresponds to Leu-168–Leu-196. Residues Leu-197–Val-217 form a helical membrane-spanning segment. The Cytoplasmic segment spans residues Cys-218–Val-370. The disordered stretch occupies residues Met-224–Val-370. Over residues Ala-246–Glu-260 the composition is skewed to basic and acidic residues. Residues Pro-331–Ser-346 are compositionally biased toward low complexity.

The protein belongs to the connexin family. Delta-type subfamily. In terms of assembly, a connexon is composed of a hexamer of connexins. Expressed in pancreas, kidney, skeletal muscle, liver, placenta, and heart.

Its subcellular location is the cell membrane. It is found in the cell junction. It localises to the gap junction. Its function is as follows. One gap junction consists of a cluster of closely packed pairs of transmembrane channels, the connexons, through which materials of low MW diffuse from one cell to a neighboring cell. This Homo sapiens (Human) protein is Gap junction delta-4 protein (GJD4).